Reading from the N-terminus, the 472-residue chain is MSENNKNSLESSLRQLKCHFTWNLMEGENSLDDFEDKVFYRTEFQNREFKATMCNLLAYLKHLKGQNEAALECLRKAEELIQQEHADQAEIRSLVTWGNYAWVYYHMGRLSDVQIYVDKVKHVCEKFSSPYRIESPELDCEEGWTRLKCGGNQNERAKVCFEKALEKKPKNPEFTSGLAIASYRLDNWPPSQNAIDPLRQAIRLNPDNQYLKVLLALKLHKMREEGEEEGEGEKLVEEALEKAPGVTDVLRSAAKFYRRKDEPDKAIELLKKALEYIPNNAYLHCQIGCCYRAKVFQVMNLRENGMYGKRKLLELIGHAVAHLKKADEANDNLFRVCSILASLHALADQYEDAEYYFQKEFSKELTPVAKQLLHLRYGNFQLYQMKCEDKAIHHFIEGVKINQKSREKEKMKDKLQKIAKMRLSKNGADSEALHVLAFLQELNEKMQQADEDSERGLESGSLIPSASSWNGE.

Residue Ser-2 is modified to N-acetylserine. TPR repeat units follow at residues 51 to 89, 90 to 135, 136 to 171, 172 to 208, 247 to 280, 281 to 335, 336 to 366, 367 to 405, and 406 to 448; these read ATMC…ADQA, EIRS…RIES, PELD…KPKN, PEFT…NPDN, TDVL…IPNN, AYLH…NLFR, VCSI…KELT, PVAK…NQKS, and REKE…KMQQ. The disordered stretch occupies residues 446–472; sequence MQQADEDSERGLESGSLIPSASSWNGE. The span at 462-472 shows a compositional bias: polar residues; it reads LIPSASSWNGE.

This sequence belongs to the IFIT family. As to quaternary structure, domain-swapped homodimer. Component of an interferon-dependent multiprotein complex, at least composed of IFIT1, IFIT2 and IFIT3. Interacts with IFIT1 and IFIT3. Interacts with STING1/MITA and disrupts its interaction with MAVS or TBK1. Interacts with EIF3E and EIF3C.

The protein localises to the cytoplasm. The protein resides in the endoplasmic reticulum. IFN-induced antiviral protein which inhibits expression of viral messenger RNAs lacking 2'-O-methylation of the 5' cap. The ribose 2'-O-methylation would provide a molecular signature to distinguish between self and non-self mRNAs by the host during viral infection. Viruses evolved several ways to evade this restriction system such as encoding their own 2'-O-methylase for their mRNAs or by stealing host cap containing the 2'-O-methylation (cap snatching mechanism). Binds AU-rich viral RNAs, with or without 5' triphosphorylation, RNA-binding is required for antiviral activity. Can promote apoptosis. The polypeptide is Interferon-induced protein with tetratricopeptide repeats 2 (IFIT2) (Homo sapiens (Human)).